The primary structure comprises 68 residues: Large ribosomal subunit protein bL32 (68 aa).

Residues 1–24 form a disordered region; it reads MAVPQNRVTRSRRNMRRSHDALVA.

It belongs to the bacterial ribosomal protein bL32 family.

This Paracoccus denitrificans (strain Pd 1222) protein is Large ribosomal subunit protein bL32.